A 364-amino-acid polypeptide reads, in one-letter code: MTEKEVLESPKPSFPAETRQSGLQRLKQLLRKGSTGTKEMELPPEPQANGEAVGAGGGPIYYIYEEEEEEEEEEEEPPPEPPKLVNDKPHKFKDHFFKKPKFCDVCARMIVLNNKFGLRCKNCKTNIHEHCQSYVEMQRCFGKIPPGFHRAYSSPLYSNQQYACVKDLSAANRNDPVFETLRTGVIMANKERKKGQADKKNPVAAMMEEEPESARPEEGKPQDGNPEGDKKAEKKTPDDKHKQPGFQQSHYFVALYRFKALEKDDLDFPPGEKITVIDDSNEEWWRGKIGEKVGFFPPNFIIRVRAGERVHRVTRSFVGNREIGQITLKKDQIVVQKGDEAGGYVKVYTGRKVGLFPTDFLEEI.

2 disordered regions span residues 1–89 (MTEK…NDKP) and 189–244 (NKER…HKQP). A compositionally biased stretch (acidic residues) spans 64–78 (YEEEEEEEEEEEEPP). A Phorbol-ester/DAG-type zinc finger spans residues 89-140 (PHKFKDHFFKKPKFCDVCARMIVLNNKFGLRCKNCKTNIHEHCQSYVEMQRC). Residues 212–242 (ESARPEEGKPQDGNPEGDKKAEKKTPDDKHK) show a composition bias toward basic and acidic residues. 2 consecutive SH3 domains span residues 247 to 306 (QQSH…RVRA) and 307 to 364 (GERV…LEEI).

As to quaternary structure, interacts (via SH3 domains) with the calcium channels CACNA1S and CACNA1C. Component of a calcium channel complex with CACNA1S and CACNB1. Component of a calcium channel complex with CACNA1C and CACNB1.

The protein resides in the cytoplasm. The protein localises to the cell membrane. Its subcellular location is the sarcolemma. It is found in the T-tubule. In terms of biological role, required for normal excitation-contraction coupling in skeletal muscle and for normal muscle contraction in response to membrane depolarization. Required for normal Ca(2+) release from the sarcplasmic reticulum, which ultimately leads to muscle contraction. Probably functions via its effects on muscle calcium channels. Increases CACNA1S channel activity, in addition to its role in enhancing the expression of CACNA1S at the cell membrane. Has a redundant role in promoting the expression of the calcium channel CACNA1S at the cell membrane. Slows down the inactivation rate of the calcium channel CACNA1C. The sequence is that of SH3 and cysteine-rich domain-containing protein 3 (STAC3) from Homo sapiens (Human).